A 1105-amino-acid chain; its full sequence is KAT8 regulatory NSL complex subunit 1 (1105 aa).

The residue at position 104 (Lys104) is an N6-acetyllysine. 2 disordered regions span residues 145–211 and 225–263; these read GQTA…CTLP and NNST…GVKL. A compositionally biased stretch (polar residues) spans 225–258; the sequence is NNSTANKSSVNSMEQPALQGSSRLSPGTDSSSNL. Ser249 is modified (phosphoserine). Lys262 is covalently cross-linked (Glycyl lysine isopeptide (Lys-Gly) (interchain with G-Cter in SUMO2)). Ser268 is modified (phosphoserine). Residues 283-314 are a coiled coil; the sequence is RITALLRRQADIESRARRLQKRLQVVQAKQVE. A Glycyl lysine isopeptide (Lys-Gly) (interchain with G-Cter in SUMO2) cross-link involves residue Lys331. Disordered stretches follow at residues 399–426 and 733–857; these read DSDV…PEQR and TAKL…RRGE. Composition is skewed to basic and acidic residues over residues 741-753 and 780-804; these read TRPD…HLDD and DPNH…HHTD. Residues 827-850 are compositionally biased toward low complexity; sequence STSSDSPAPASSSSQVTASTSQQP. The interval 850–882 is required for activation of KAT8 histone acetyltransferase activity; the sequence is PVRRRRGESSFDINNIVIPMSVAATTRVEKLQY. The PEHE domain maps to 884 to 1035; sequence EILTPSWREV…GLDEQSVQPW (152 aa). The segment at 910–928 is interaction with KAT8 HAT domain; the sequence is EDLSDAAFAALHAKCEEME. Residues 938-1034 form a disordered region; sequence VPPQRRGSRS…LGLDEQSVQP (97 aa). A compositionally biased stretch (polar residues) spans 955-965; it reads TTPQLGSANPS. Residues 975–988 show a composition bias toward low complexity; sequence SSSHSLSEYSHGQS. Phosphoserine is present on residues Ser991 and Ser994. At Thr1003 the chain carries Phosphothreonine. Basic and acidic residues predominate over residues 1008–1019; the sequence is DTPRHLASEDTR. Ser1045 carries the phosphoserine modification. A disordered region spans residues 1058–1105; that stretch reads ERAARCTRRTSGSKTGRETEAAPTSPPIVPLKSRHLVAAATAQRPTHR.

As to quaternary structure, component of the NSL complex at least composed of MOF/KAT8, KANSL1, KANSL2, KANSL3, MCRS1, PHF20, OGT1/OGT, WDR5 and HCFC1. Interacts (via PEHE domain) with KAT8 (via HAT domain); the interaction is direct. Component of some MLL1/MLL complex, at least composed of the core components KMT2A/MLL1, ASH2L, HCFC1, WDR5 and RBBP5, as well as the facultative components BACC1, CHD8, E2F6, HSP70, INO80C, KANSL1, LAS1L, MAX, MCRS1, MGA, KAT8/MOF, PELP1, PHF20, PRP31, RING2, RUVB1/TIP49A, RUVB2/TIP49B, SENP3, TAF1, TAF4, TAF6, TAF7, TAF9 and TEX10. Expressed in the brain.

It localises to the nucleus. The protein localises to the chromosome. It is found in the centromere. The protein resides in the kinetochore. Its subcellular location is the mitochondrion. It localises to the cytoplasm. The protein localises to the cytoskeleton. It is found in the spindle pole. Functionally, non-catalytic component of the NSL histone acetyltransferase complex, a multiprotein complex that mediates histone H4 acetylation at 'Lys-5'- and 'Lys-8' (H4K5ac and H4K8ac) at transcription start sites and promotes transcription initiation. The NSL complex also acts as a regulator of gene expression in mitochondria. In addition to its role in transcription, KANSL1 also plays an essential role in spindle assembly during mitosis. Associates with microtubule ends and contributes to microtubule stability. The polypeptide is KAT8 regulatory NSL complex subunit 1 (KANSL1) (Homo sapiens (Human)).